Here is a 158-residue protein sequence, read N- to C-terminus: Rhombotin-2 (158 aa).

2 consecutive LIM zinc-binding domains span residues 28–90 (LTCG…LFGQ) and 92–154 (GLCA…WTKL).

As to expression, expression becomes restricted to the ventral blood island (VBI) as the embryo develops. In late neurula and early tailbud embryos, also expressed in the dorsal lateral plate (DLP), the site of definitive hematopoiesis in the tadpole. Expression in the DLP diminishes during tailbud stages. Expressed in circulating blood cells of tadpoles. Also expressed in non-hematopoietic sites, including the tailbud region and the central nervous system of early neurula embryos.

Its subcellular location is the nucleus. Functionally, transcription factor that acts synergistically with tal1/scl and gata1 to specify embryonic dorsal mesoderm to a hematopoietic fate. Induces globin gene expression together with fgf. The chain is Rhombotin-2 from Xenopus laevis (African clawed frog).